The primary structure comprises 112 residues: UPF0212 protein Mpal_1084 (112 aa).

Belongs to the UPF0212 family.

This Methanosphaerula palustris (strain ATCC BAA-1556 / DSM 19958 / E1-9c) protein is UPF0212 protein Mpal_1084.